The following is a 280-amino-acid chain: Protoheme IX farnesyltransferase (280 aa).

A run of 9 helical transmembrane segments spans residues 2–21 (VVAT…RAGL), 30–50 (AAVP…VVSG), 83–103 (LALW…LVGV), 105–125 (ATTG…YTPL), 131–151 (LSLP…WTSV), 160–180 (FLLF…ISLF), 206–226 (IVGY…LGVA), 229–249 (VYLG…VYGL), and 260–280 (QVFF…MIGA).

The protein belongs to the UbiA prenyltransferase family. Protoheme IX farnesyltransferase subfamily.

It localises to the cell inner membrane. The catalysed reaction is heme b + (2E,6E)-farnesyl diphosphate + H2O = Fe(II)-heme o + diphosphate. The protein operates within porphyrin-containing compound metabolism; heme O biosynthesis; heme O from protoheme: step 1/1. Its function is as follows. Converts heme B (protoheme IX) to heme O by substitution of the vinyl group on carbon 2 of heme B porphyrin ring with a hydroxyethyl farnesyl side group. This chain is Protoheme IX farnesyltransferase, found in Sorangium cellulosum (strain So ce56) (Polyangium cellulosum (strain So ce56)).